We begin with the raw amino-acid sequence, 146 residues long: Protein SprT-like (146 aa).

Residues 6–141 (YVKTVSIEDF…GCGLCQGKLI (136 aa)) form the SprT-like domain. Histidine 64 lines the Zn(2+) pocket. The active site involves glutamate 65. Histidine 68 contacts Zn(2+).

This sequence belongs to the SprT family. Requires Zn(2+) as cofactor.

The protein localises to the cytoplasm. This is Protein SprT-like from Streptococcus thermophilus (strain CNRZ 1066).